The following is a 75-amino-acid chain: Probable protein BRICK1-A (75 aa).

Residues 41–72 (MSCRSRLATLNEKLTALERRIEYIEARVTKGE) adopt a coiled-coil conformation.

This sequence belongs to the BRK1 family.

Its subcellular location is the cytoplasm. It localises to the cytoskeleton. Involved in regulation of actin and microtubule organization. Part of a WAVE complex that activates the Arp2/3 complex. In Xenopus laevis (African clawed frog), this protein is Probable protein BRICK1-A (brk1-a).